The following is a 475-amino-acid chain: FAD-dependent monooxygenase sdgC (475 aa).

A signal peptide spans 1-23 (MDKRSFKVIVVGGSIAGLTLAHS). 3 residues coordinate FAD: glutamate 35, glycine 49, and arginine 126. Residue asparagine 236 is glycosylated (N-linked (GlcNAc...) asparagine). Alanine 330 contributes to the FAD binding site. Residues 446–466 (ISGVLLLVIPIIALVYGYSVI) form a helical membrane-spanning segment.

The protein belongs to the paxM FAD-dependent monooxygenase family. Requires FAD as cofactor.

The protein resides in the membrane. Its pathway is secondary metabolite biosynthesis. Functionally, FAD-dependent monooxygenase; part of the gene cluster that mediates the biosynthesis of the polyenes aspernidgulenes. The carbon backbone of aspernidgulenes is synthesized by the HR-PKS sdgA, which accepts acetyl-CoA as the starter unit and performs malonyl-CoA extensions as well as regioselective methylation and reduction. The resulting nonaketide offloads the HR-PKS by intramolecular lactonization to yield the 5,6-dihydro-alpha-pyrone-containing hexaenoic acids preaspernidgulene A1 and A2. The FAD-dependent monooxygenase sdgC then installs the first epoxide on the penultimate double bond. Subsequently, the FAD-dependent monooxygenase sdgF presumably generates a ketone intermediate through Meinwald rearrangement involving a hydride shift. Next, sdgC introduces another epoxide on the last olefin of the ketone intermediate after E/Z isomerization. The epoxide hydrolase sdgD then catalyzes stereospecific cyclization of the 5,6-dihydro-alpha-pyrone and opening of the epoxide ring to form an oxygenated trimethylcyclopentanone and an oxabicyclo[2.2.1]heptane unit. Finally, the bicyclic unit undergoes hydrolytic cleavage, either spontaneously or catalyzed by sdgD, to assemble the dimethyl-gamma-lactone moiety in aspernidgulene A1. This Emericella nidulans (strain FGSC A4 / ATCC 38163 / CBS 112.46 / NRRL 194 / M139) (Aspergillus nidulans) protein is FAD-dependent monooxygenase sdgC.